The following is a 367-amino-acid chain: tRNA-specific 2-thiouridylase MnmA (367 aa).

ATP is bound by residues 9–16 (LMSGGVDS) and F35. The Nucleophile role is filled by C107. C107 and C205 are disulfide-bonded. Position 131 (G131) interacts with ATP. The tract at residues 155–157 (KDQ) is interaction with tRNA. C205 serves as the catalytic Cysteine persulfide intermediate.

The protein belongs to the MnmA/TRMU family.

The protein resides in the cytoplasm. It carries out the reaction S-sulfanyl-L-cysteinyl-[protein] + uridine(34) in tRNA + AH2 + ATP = 2-thiouridine(34) in tRNA + L-cysteinyl-[protein] + A + AMP + diphosphate + H(+). Catalyzes the 2-thiolation of uridine at the wobble position (U34) of tRNA, leading to the formation of s(2)U34. This Petrotoga mobilis (strain DSM 10674 / SJ95) protein is tRNA-specific 2-thiouridylase MnmA.